The sequence spans 316 residues: HTH-type transcriptional regulator cbl (316 aa).

The HTH lysR-type domain maps to 1-59 (MNFQQLKIIREAARQDYNLTEVANMLFTSQSGVSRHIRELEDELGIEIFVRRGKRLLGM). Residues 19 to 38 (LTEVANMLFTSQSGVSRHIR) constitute a DNA-binding region (H-T-H motif).

Belongs to the LysR transcriptional regulatory family.

Functionally, may be an accessory regulatory protein within the cys regulon. In Escherichia coli (strain K12), this protein is HTH-type transcriptional regulator cbl (cbl).